A 315-amino-acid polypeptide reads, in one-letter code: Large ribosomal subunit protein uL29m (315 aa).

It belongs to the universal ribosomal protein uL29 family. As to quaternary structure, component of the mitochondrial large ribosomal subunit. Mature mitochondrial ribosomes consist of a small (37S) and a large (54S) subunit. The 37S subunit contains at least 33 different proteins and 1 molecule of RNA (15S). The 54S subunit contains at least 45 different proteins and 1 molecule of RNA (21S).

It localises to the mitochondrion. This chain is Large ribosomal subunit protein uL29m (MRPL4), found in Candida glabrata (strain ATCC 2001 / BCRC 20586 / JCM 3761 / NBRC 0622 / NRRL Y-65 / CBS 138) (Yeast).